Consider the following 89-residue polypeptide: Large ribosomal subunit protein bL27 (89 aa).

Residues 1 to 21 (MAHKKGASSSRNGRDSNAQRL) form a disordered region. Residues 7–19 (ASSSRNGRDSNAQ) are compositionally biased toward polar residues.

The protein belongs to the bacterial ribosomal protein bL27 family.

The protein is Large ribosomal subunit protein bL27 of Frankia alni (strain DSM 45986 / CECT 9034 / ACN14a).